The sequence spans 577 residues: Arginine--tRNA ligase (577 aa).

Positions 122-132 match the 'HIGH' region motif; that stretch reads PNVAKEMHVGH.

It belongs to the class-I aminoacyl-tRNA synthetase family. As to quaternary structure, monomer.

The protein localises to the cytoplasm. The catalysed reaction is tRNA(Arg) + L-arginine + ATP = L-arginyl-tRNA(Arg) + AMP + diphosphate. In Escherichia coli O81 (strain ED1a), this protein is Arginine--tRNA ligase.